A 248-amino-acid polypeptide reads, in one-letter code: Ribonuclease 3 (248 aa).

Residues 16–145 (TEGLETSIGY…LLAAMYLDGG (130 aa)) enclose the RNase III domain. Glutamate 58 is a binding site for Mg(2+). Residue aspartate 62 is part of the active site. The Mg(2+) site is built by asparagine 131 and glutamate 134. The active site involves glutamate 134. The 70-residue stretch at 172-241 (DFKTDFQELA…ARQCLERLET (70 aa)) folds into the DRBM domain.

This sequence belongs to the ribonuclease III family. Homodimer. Requires Mg(2+) as cofactor.

The protein resides in the cytoplasm. It carries out the reaction Endonucleolytic cleavage to 5'-phosphomonoester.. Digests double-stranded RNA. Involved in the processing of primary rRNA transcript to yield the immediate precursors to the large and small rRNAs (23S and 16S). Processes some mRNAs, and tRNAs when they are encoded in the rRNA operon. Processes pre-crRNA and tracrRNA of type II CRISPR loci if present in the organism. This chain is Ribonuclease 3, found in Geobacter sulfurreducens (strain ATCC 51573 / DSM 12127 / PCA).